The following is a 134-amino-acid chain: Cytochrome b (134 aa).

A run of 3 helical transmembrane segments spans residues 33-53 (FGSLLGLCLAVQILTGLFLAM), 77-98 (WLIRYMHANGASMFFICLFLHV), and 113-133 (WNMGIILLFAVMATAFMGYVL). The heme b site is built by histidine 83 and histidine 97.

It belongs to the cytochrome b family. As to quaternary structure, the cytochrome bc1 complex contains 11 subunits: 3 respiratory subunits (MT-CYB, CYC1 and UQCRFS1), 2 core proteins (UQCRC1 and UQCRC2) and 6 low-molecular weight proteins (UQCRH/QCR6, UQCRB/QCR7, UQCRQ/QCR8, UQCR10/QCR9, UQCR11/QCR10 and a cleavage product of UQCRFS1). This cytochrome bc1 complex then forms a dimer. The cofactor is heme b.

It localises to the mitochondrion inner membrane. In terms of biological role, component of the ubiquinol-cytochrome c reductase complex (complex III or cytochrome b-c1 complex) that is part of the mitochondrial respiratory chain. The b-c1 complex mediates electron transfer from ubiquinol to cytochrome c. Contributes to the generation of a proton gradient across the mitochondrial membrane that is then used for ATP synthesis. The sequence is that of Cytochrome b (MT-CYB) from Microtus subterraneus (European pine vole).